A 367-amino-acid chain; its full sequence is MSLADSVLAVNNDLPIRTDKPVHSGKVRSVYWLTEADSARLIRERGYDVPADTPLAIMVISDRISAFDCIFHGEGDLRGIPGKGAALNAISNHWFGLFKENGLADSHILDIPHPFVWIVQKARPIKVEAIIRQYITGSMWRAYQKGERVFCGITLPEGLQKDQKLPELLITPSTKGILTGIPGVPEQDDVNISRADIEANFEAFGFEKKEDIDLYEKLLKEGFGVISEALAKLDQVFVDTKFEFGYVTDSNGNSKLIYMDEVGTPDSSRIWDGAAYRDGKIVENSKEGFRQFLLNHFPDPDILLNKDRMPEREALARDNALPLDAMMNVSRTYTGIAEKVTGRKIELSDNPKAEIIAILKEQYALVD.

It belongs to the SAICAR synthetase family.

It catalyses the reaction 5-amino-1-(5-phospho-D-ribosyl)imidazole-4-carboxylate + L-aspartate + ATP = (2S)-2-[5-amino-1-(5-phospho-beta-D-ribosyl)imidazole-4-carboxamido]succinate + ADP + phosphate + 2 H(+). The protein operates within purine metabolism; IMP biosynthesis via de novo pathway; 5-amino-1-(5-phospho-D-ribosyl)imidazole-4-carboxamide from 5-amino-1-(5-phospho-D-ribosyl)imidazole-4-carboxylate: step 1/2. The chain is Phosphoribosylaminoimidazole-succinocarboxamide synthase from Shewanella amazonensis (strain ATCC BAA-1098 / SB2B).